The following is a 486-amino-acid chain: Monocarboxylate transporter 12 (486 aa).

Residues 1-9 (MTKITRVSL) lie on the Cytoplasmic side of the membrane. The next 12 helical transmembrane spans lie at 10-30 (ASPPDGGWGWMIVAGCFLVTI), 58-78 (AWIHSIVDCMTMLCAPLGSVV), 86-106 (AGIMLGGLLASTGFILGSFAT), 115-135 (LGVLTGLGFALCYSPAIAMVG), 148-168 (IAMSGSGIGTFILAPVVQLLI), 177-197 (LLILGGFVLNLCVCGALMRPI), 253-273 (FVVLAVSVLFMAYGCSPLFVY), 289-309 (AFLMSILGVIDIVGNITFGWL), 320-340 (YVCYLFAVALDGLCYLCLPML), 353-373 (FGYFDGAYVTLIPVVTAEIVG), 383-403 (VVYFLHAVPYLVSPPIAGWLV), and 410-430 (TAAFLLCGFAMIFSSILLGFV). Topologically, residues 431 to 486 (RIVKRMKRTQVPFPVKDSDPKLQLWTNGSVAYSVARELDQKDEEPLPKARSGCNLT) are cytoplasmic.

It belongs to the major facilitator superfamily. Monocarboxylate porter (TC 2.A.1.13) family. Interacts with isoform 2 of BSG; this interaction is required for its localization to the plasma membrane. Highly expressed in the lung, liver, kidney, and pancreas. Expressed in eye lens.

The protein resides in the cell membrane. The protein localises to the basolateral cell membrane. It catalyses the reaction creatine(in) = creatine(out). It carries out the reaction guanidinoacetate(in) = guanidinoacetate(out). With respect to regulation, creatine uptake is inhibited by carbonyl cyanide 3-chlorophenylhydrazone (CCCP) and by valinomycin. Its function is as follows. Functions as a transporter for creatine and as well for its precursor guanidinoacetate. Transport of creatine and GAA is independent of resting membrane potential and extracellular Na(+), Cl(-), or pH. Contributes to the process of creatine biosynthesis and distribution. This is Monocarboxylate transporter 12 from Mus musculus (Mouse).